Here is a 583-residue protein sequence, read N- to C-terminus: Zinc finger protein 277 (583 aa).

2 C2H2-type zinc fingers span residues 351–375 (LQCLYCEKTFRDKNTLKDHMRKKQH) and 482–508 (HQCKCYSCHVKFKSKADLRTHMEDTKH).

This sequence belongs to the ZNF277 family. In terms of assembly, interacts (via zinc-finger domains) with RPS2/40S ribosomal protein S2, perhaps as nascent RPS2 is synthesized during translation; the interaction is direct; the interaction is extra-ribosomal. Interaction with RPS2 competes with the binding of RPS2 to protein arginine methyltransferase PRMT3. Interacts with Polycomb group (PcG) complex protein BMI1. May be part of a complex including at least ZNF277, BMI1 and RNF2/RING2.

The protein localises to the nucleus. It is found in the cytoplasm. It localises to the nucleolus. The protein resides in the chromosome. Functionally, probable transcription factor. Involved in modulation of cellular senescence; represses transcription of the tumor suppressor gene INK4A/ARF, perhaps acting via the Polycomb group (PcG) complex PRC1. This is Zinc finger protein 277 from Mus musculus (Mouse).